The chain runs to 260 residues: Putative hydro-lyase Bmul_5125/BMULJ_03391 (260 aa).

Belongs to the D-glutamate cyclase family.

The polypeptide is Putative hydro-lyase Bmul_5125/BMULJ_03391 (Burkholderia multivorans (strain ATCC 17616 / 249)).